The following is a 425-amino-acid chain: Serine--tRNA ligase (425 aa).

233-235 (TAE) contributes to the L-serine binding site. Residue 264–266 (RAE) participates in ATP binding. Residue glutamate 287 coordinates L-serine. 351-354 (EISS) is an ATP binding site. Serine 387 serves as a coordination point for L-serine.

It belongs to the class-II aminoacyl-tRNA synthetase family. Type-1 seryl-tRNA synthetase subfamily. As to quaternary structure, homodimer. The tRNA molecule binds across the dimer.

The protein resides in the cytoplasm. It catalyses the reaction tRNA(Ser) + L-serine + ATP = L-seryl-tRNA(Ser) + AMP + diphosphate + H(+). The catalysed reaction is tRNA(Sec) + L-serine + ATP = L-seryl-tRNA(Sec) + AMP + diphosphate + H(+). The protein operates within aminoacyl-tRNA biosynthesis; selenocysteinyl-tRNA(Sec) biosynthesis; L-seryl-tRNA(Sec) from L-serine and tRNA(Sec): step 1/1. Functionally, catalyzes the attachment of serine to tRNA(Ser). Is also able to aminoacylate tRNA(Sec) with serine, to form the misacylated tRNA L-seryl-tRNA(Sec), which will be further converted into selenocysteinyl-tRNA(Sec). The sequence is that of Serine--tRNA ligase from Clostridium perfringens (strain ATCC 13124 / DSM 756 / JCM 1290 / NCIMB 6125 / NCTC 8237 / Type A).